The primary structure comprises 515 residues: Bifunctional purine biosynthesis protein PurH (515 aa).

The region spanning 1–145 (MTKRALISVS…KNHASVTVVV (145 aa)) is the MGS-like domain.

The protein belongs to the PurH family.

It carries out the reaction (6R)-10-formyltetrahydrofolate + 5-amino-1-(5-phospho-beta-D-ribosyl)imidazole-4-carboxamide = 5-formamido-1-(5-phospho-D-ribosyl)imidazole-4-carboxamide + (6S)-5,6,7,8-tetrahydrofolate. It catalyses the reaction IMP + H2O = 5-formamido-1-(5-phospho-D-ribosyl)imidazole-4-carboxamide. Its pathway is purine metabolism; IMP biosynthesis via de novo pathway; 5-formamido-1-(5-phospho-D-ribosyl)imidazole-4-carboxamide from 5-amino-1-(5-phospho-D-ribosyl)imidazole-4-carboxamide (10-formyl THF route): step 1/1. The protein operates within purine metabolism; IMP biosynthesis via de novo pathway; IMP from 5-formamido-1-(5-phospho-D-ribosyl)imidazole-4-carboxamide: step 1/1. This chain is Bifunctional purine biosynthesis protein PurH, found in Streptococcus thermophilus (strain ATCC BAA-491 / LMD-9).